The primary structure comprises 382 residues: Succinate--CoA ligase [ADP-forming] subunit beta (382 aa).

Residues lysine 9–tyrosine 240 enclose the ATP-grasp domain. ATP-binding positions include lysine 45, glycine 52–glycine 54, valine 94, and glutamate 99. Positions 193 and 207 each coordinate Mg(2+). Substrate is bound by residues asparagine 260 and glycine 317–threonine 319.

It belongs to the succinate/malate CoA ligase beta subunit family. As to quaternary structure, heterotetramer of two alpha and two beta subunits. Mg(2+) serves as cofactor.

It catalyses the reaction succinate + ATP + CoA = succinyl-CoA + ADP + phosphate. The catalysed reaction is GTP + succinate + CoA = succinyl-CoA + GDP + phosphate. It participates in carbohydrate metabolism; tricarboxylic acid cycle; succinate from succinyl-CoA (ligase route): step 1/1. Its function is as follows. Succinyl-CoA synthetase functions in the citric acid cycle (TCA), coupling the hydrolysis of succinyl-CoA to the synthesis of either ATP or GTP and thus represents the only step of substrate-level phosphorylation in the TCA. The beta subunit provides nucleotide specificity of the enzyme and binds the substrate succinate, while the binding sites for coenzyme A and phosphate are found in the alpha subunit. This chain is Succinate--CoA ligase [ADP-forming] subunit beta, found in Pyrobaculum aerophilum (strain ATCC 51768 / DSM 7523 / JCM 9630 / CIP 104966 / NBRC 100827 / IM2).